A 383-amino-acid polypeptide reads, in one-letter code: Deoxyguanosinetriphosphate triphosphohydrolase-like protein (383 aa).

Residues 62-198 (RLTHSLEVST…ASLADDISYI (137 aa)) form the HD domain.

Belongs to the dGTPase family. Type 2 subfamily.

The protein is Deoxyguanosinetriphosphate triphosphohydrolase-like protein of Rickettsia prowazekii (strain Madrid E).